A 410-amino-acid chain; its full sequence is Formyl-CoA:oxalate CoA-transferase (410 aa).

CoA-binding positions include 18–19 (QS), 72–75 (LNTK), 96–98 (NFG), Arg104, and 136–139 (KAYE). Asp168 (nucleophile) is an active-site residue. Residues 221-245 (PLAEYPNEDFGDEVPRSGNASGGGQ) are disordered. 243 to 245 (GGQ) is a substrate binding site.

Belongs to the CoA-transferase III family. Frc subfamily. In terms of assembly, homodimer.

It carries out the reaction formyl-CoA + oxalate = oxalyl-CoA + formate. Its pathway is metabolic intermediate degradation; oxalate degradation; CO(2) and formate from oxalate: step 1/2. Its function is as follows. Involved in the catabolism of oxalate and in the adapatation to low pH via the induction of the oxalate-dependent acid tolerance response (ATR). Catalyzes the transfer of the CoA moiety from formyl-CoA to oxalate. The protein is Formyl-CoA:oxalate CoA-transferase of Streptomyces coelicolor (strain ATCC BAA-471 / A3(2) / M145).